Here is a 660-residue protein sequence, read N- to C-terminus: tRNA 5-methylaminomethyl-2-thiouridine biosynthesis bifunctional protein MnmC (660 aa).

A tRNA (mnm(5)s(2)U34)-methyltransferase region spans residues 1–233 (MTHSHAQLVW…KRHISHGWIA (233 aa)). An FAD-dependent cmnm(5)s(2)U34 oxidoreductase region spans residues 260–660 (VGGGLAGAAS…IRRKLDPDAL (401 aa)).

It in the N-terminal section; belongs to the methyltransferase superfamily. tRNA (mnm(5)s(2)U34)-methyltransferase family. In the C-terminal section; belongs to the DAO family. The cofactor is FAD.

Its subcellular location is the cytoplasm. The catalysed reaction is 5-aminomethyl-2-thiouridine(34) in tRNA + S-adenosyl-L-methionine = 5-methylaminomethyl-2-thiouridine(34) in tRNA + S-adenosyl-L-homocysteine + H(+). Its function is as follows. Catalyzes the last two steps in the biosynthesis of 5-methylaminomethyl-2-thiouridine (mnm(5)s(2)U) at the wobble position (U34) in tRNA. Catalyzes the FAD-dependent demodification of cmnm(5)s(2)U34 to nm(5)s(2)U34, followed by the transfer of a methyl group from S-adenosyl-L-methionine to nm(5)s(2)U34, to form mnm(5)s(2)U34. This chain is tRNA 5-methylaminomethyl-2-thiouridine biosynthesis bifunctional protein MnmC, found in Chromobacterium violaceum (strain ATCC 12472 / DSM 30191 / JCM 1249 / CCUG 213 / NBRC 12614 / NCIMB 9131 / NCTC 9757 / MK).